Reading from the N-terminus, the 1470-residue chain is Guanine nucleotide exchange factor subunit R06F6.8 (1470 aa).

3 WD repeats span residues 20-58 (STAADIKSIVANRDRRLIAVATNDAIYIWLANPQLLLCS), 68-107 (ETRGELKEIYWKPDSTSIAVTTNQCKILIYNLDLRDDEQC), and 472-512 (AYCS…VVGV). Disordered regions lie at residues 673–710 (QSQNQDLPWKNHRRNGSNVSIQSVSTSTTSEPSSPMNQ), 975–1001 (FFRTPPPSAKTSLSRRPTVSSPSADSS), 1017–1045 (RLNKVRHSQSTEQKDAPRKDSIGGSSKDK), and 1238–1259 (RSPSTSSSMNHHAPLAPPSPSS). Residues 689 to 707 (SNVSIQSVSTSTTSEPSSP) are compositionally biased toward low complexity. The span at 983-1001 (AKTSLSRRPTVSSPSADSS) shows a compositional bias: polar residues. Residues 1028 to 1045 (EQKDAPRKDSIGGSSKDK) show a composition bias toward basic and acidic residues. The helical transmembrane segment at 1294 to 1314 (LLLSLFSQTATIDWIFLFCLL) threads the bilayer. A compositionally biased stretch (basic and acidic residues) spans 1385–1403 (SPDNENRKASQKTSADDPK). The segment at 1385 to 1447 (SPDNENRKAS…SADRAHKSVK (63 aa)) is disordered. Residues 1411-1424 (SGSSKLNNSFSNPK) are compositionally biased toward polar residues. Positions 1431-1447 (GRRERSRSADRAHKSVK) are enriched in basic and acidic residues.

Belongs to the RIC1 family. In terms of assembly, component of a guanine nucleotide exchange factor (GEF) complex.

The protein resides in the membrane. Functionally, probable component of a guanine nucleotide exchange factor (GEF) that may be required for efficient fusion of endosome-derived vesicles with the Golgi. The chain is Guanine nucleotide exchange factor subunit R06F6.8 from Caenorhabditis elegans.